Consider the following 66-residue polypeptide: uncharacterized protein (66 aa).

This is an uncharacterized protein from Saccharomyces cerevisiae (strain ATCC 204508 / S288c) (Baker's yeast).